Reading from the N-terminus, the 491-residue chain is Aspartyl/glutamyl-tRNA(Asn/Gln) amidotransferase subunit B (491 aa).

Belongs to the GatB/GatE family. GatB subfamily. Heterotrimer of A, B and C subunits.

The catalysed reaction is L-glutamyl-tRNA(Gln) + L-glutamine + ATP + H2O = L-glutaminyl-tRNA(Gln) + L-glutamate + ADP + phosphate + H(+). The enzyme catalyses L-aspartyl-tRNA(Asn) + L-glutamine + ATP + H2O = L-asparaginyl-tRNA(Asn) + L-glutamate + ADP + phosphate + 2 H(+). In terms of biological role, allows the formation of correctly charged Asn-tRNA(Asn) or Gln-tRNA(Gln) through the transamidation of misacylated Asp-tRNA(Asn) or Glu-tRNA(Gln) in organisms which lack either or both of asparaginyl-tRNA or glutaminyl-tRNA synthetases. The reaction takes place in the presence of glutamine and ATP through an activated phospho-Asp-tRNA(Asn) or phospho-Glu-tRNA(Gln). In Paraburkholderia xenovorans (strain LB400), this protein is Aspartyl/glutamyl-tRNA(Asn/Gln) amidotransferase subunit B.